The primary structure comprises 511 residues: Cobyric acid synthase (511 aa).

Positions 251–443 (LLDIAIICLP…IHGIFDNDIF (193 aa)) constitute a GATase cobBQ-type domain. The active-site Nucleophile is cysteine 332. Histidine 435 is an active-site residue.

Belongs to the CobB/CobQ family. CobQ subfamily.

The protein operates within cofactor biosynthesis; adenosylcobalamin biosynthesis. In terms of biological role, catalyzes amidations at positions B, D, E, and G on adenosylcobyrinic A,C-diamide. NH(2) groups are provided by glutamine, and one molecule of ATP is hydrogenolyzed for each amidation. The protein is Cobyric acid synthase of Listeria innocua serovar 6a (strain ATCC BAA-680 / CLIP 11262).